Reading from the N-terminus, the 85-residue chain is uncharacterized protein (85 aa).

This sequence belongs to the ycf76 family.

Its subcellular location is the plastid. It localises to the chloroplast. This is an uncharacterized protein from Oryza sativa subsp. japonica (Rice).